We begin with the raw amino-acid sequence, 241 residues long: Prolactin-8A8 (241 aa).

The first 30 residues, 1 to 30 (MELQFRQPHFSDALLLLLLSNLLLWEKASS), serve as a signal peptide directing secretion. Cystine bridges form between Cys34/Cys41, Cys101/Cys217, and Cys234/Cys241. Asn213 carries an N-linked (GlcNAc...) asparagine glycan.

The protein belongs to the somatotropin/prolactin family. Expressed specifically in the placenta. Predominantly expressed in spongiotrophoblast cells.

The protein localises to the secreted. The sequence is that of Prolactin-8A8 (Prl8a8) from Mus musculus (Mouse).